Consider the following 506-residue polypeptide: CDK5 regulatory subunit-associated protein 3 (506 aa).

Short sequence motifs (shuffled ATG8-binding motif) lie at residues 267-270 (IDWG), 292-295 (IDWG), and 310-313 (IDWG). The tract at residues 269-506 (WGDFGVEAVS…RPVNLMGTSL (238 aa)) is required for interaction with UFL1 and mediates interaction with CHEK1. The tract at residues 355–370 (DELMELEIFLARRAVE) is RPL10a-binding domain (RBD). Residue Lys-450 forms a Glycyl lysine isopeptide (Lys-Gly) (interchain with G-Cter in SUMO2) linkage.

The protein belongs to the CDK5RAP3 family. In terms of assembly, substrate adapter component of the UFM1 ribosome E3 ligase (UREL) complex, composed of UFL1, DDRGK1 and CDK5RAP3. Interaction with UFL1 anchors CDK5RAP3 in the cytoplasm, preventing its translocation to the nucleus which allows expression of the CCND1 cyclin and progression of cells through the G1/S transition. Interacts with ATG8 family proteins MAP1LC3A, MAP1LC3B, GABARAP, GABARAPL1 and GABARAPL2. Interacts with CDK5R1; competes with CDK5RAP1 and CDK5RAP2. Interacts with RELA. Interacts with CHEK1; may negatively regulate CHEK1 and thereby stimulate entry into mitosis. Interacts with CDKN2A/ARF and MDM2; forms a ternary complex involved in regulation of p53/TP53. Interacts with MAPK14. Interacts with CCNB1. Interacts with TUBG1; may regulate CDK5RAP3 in mitotic G2/M transition checkpoint. In terms of processing, may be phosphorylated by CDK5. Post-translationally, ubiquitinated. Probably triggers proteasomal degradation and is negatively regulated by UFL1. May be ufmylated. In terms of processing, cleaved by caspases early during apoptosis, the resulting peptides may play a role in rupture of the nuclear envelope.

It is found in the endoplasmic reticulum membrane. Its subcellular location is the cytoplasm. The protein localises to the nucleus. The protein resides in the cytoskeleton. It localises to the microtubule organizing center. It is found in the centrosome. Substrate adapter of E3 ligase complexes mediating ufmylation, the covalent attachment of the ubiquitin-like modifier UFM1 to substrate proteins, and which is involved in various processes, such as ribosome recycling and reticulophagy (also called ER-phagy). As part of the UREL complex, plays a key role in ribosome recycling by promoting mono-ufmylation of RPL26/uL24 subunit of the 60S ribosome. Ufmylation of RPL26/uL24 occurs on free 60S ribosomes following ribosome dissociation: it weakens the junction between post-termination 60S subunits and SEC61 translocons, promoting release and recycling of the large ribosomal subunit from the endoplasmic reticulum membrane. Ufmylation of RPL26/uL24 and subsequent 60S ribosome recycling either take place after normal termination of translation or after ribosome stalling during cotranslational translocation at the endoplasmic reticulum. Within the UREL complex, CDK5RAP3 acts as a substrate adapter that constrains UFL1 ligase activity to mono-ufmylate RPL26/uL24 at 'Lys-134'. The UREL complex is also involved in reticulophagy in response to endoplasmic reticulum stress by promoting ufmylation of proteins such as CYB5R3, thereby promoting lysosomal degradation of ufmylated proteins. Also acts as a regulator of transcription: negatively regulates NF-kappa-B-mediated gene transcription through the control of RELA phosphorylation. Also regulates mitotic G2/M transition checkpoint and mitotic G2 DNA damage checkpoint. Through its interaction with CDKN2A/ARF and MDM2 may induce MDM2-dependent p53/TP53 ubiquitination, stabilization and activation in the nucleus, thereby promoting G1 cell cycle arrest and inhibition of cell proliferation. May also play a role in the rupture of the nuclear envelope during apoptosis. May regulate MAPK14 activity by regulating its dephosphorylation by PPM1D/WIP1. Required for liver development. The polypeptide is CDK5 regulatory subunit-associated protein 3 (Pongo abelii (Sumatran orangutan)).